Reading from the N-terminus, the 63-residue chain is Large ribosomal subunit protein bL28 (63 aa).

It belongs to the bacterial ribosomal protein bL28 family.

This chain is Large ribosomal subunit protein bL28, found in Alkaliphilus oremlandii (strain OhILAs) (Clostridium oremlandii (strain OhILAs)).